A 593-amino-acid chain; its full sequence is Metal-response element-binding transcription factor 2 (593 aa).

The interval 1-24 is disordered; sequence MRDSTGAGNSLVHKRSPLRRNQKT. The span at 12–22 shows a compositional bias: basic residues; the sequence is VHKRSPLRRNQ. Phosphothreonine is present on Thr-24. The Tudor domain maps to 44-101; it reads CKFEEGQDVLARWSDGLFYLGTIKKINILKQSCFIIFEDSSKSWVLWKDIQTGATGSG. 2 consecutive PHD-type zinc fingers follow at residues 102-157 and 201-255; these read EMVC…CVFA and QCYC…CSSG. Disordered regions lie at residues 357-410 and 444-486; these read VAFK…GPYT and GIAH…TRTG. Lys-360 is covalently cross-linked (Glycyl lysine isopeptide (Lys-Gly) (interchain with G-Cter in SUMO2)). Positions 360–374 are enriched in basic and acidic residues; the sequence is KAEKEPEGTSHEFKI. Over residues 447 to 470 the composition is skewed to polar residues; sequence HSSNTSDVDLTGASSANETTSASI. Ser-452 carries the post-translational modification Phosphoserine. Lys-522 is covalently cross-linked (Glycyl lysine isopeptide (Lys-Gly) (interchain with G-Cter in SUMO2)).

The protein belongs to the Polycomblike family. Associates with the PRC2 complex, which consists of the core components EED, EZH1 or EZH2, SUZ12, and RBBP4, and various combinations of accessory subunits including AEBP2, JARID2, PHF19, MTF2 and EPOP. Forms a dimeric PRC2.1 (class 1, PRC-PCL) complex consisting of at least SUZ12, RBBP4, and PHF19 or MTF2; PHF19 and MTF2 stabilize the dimeric structure which enhances PRC2 interaction with chromatin.

Its subcellular location is the nucleus. Polycomb group (PcG) protein that specifically binds histone H3 trimethylated at 'Lys-36' (H3K36me3) and recruits the PRC2 complex, thus enhancing PRC2 H3K27me3 methylation activity. Regulates the transcriptional networks during embryonic stem cell self-renewal and differentiation. Promotes recruitment of the PRC2 complex to the inactive X chromosome in differentiating XX ES cells and PRC2 recruitment to target genes in undifferentiated ES cells. Required to repress Hox genes by enhancing H3K27me3 methylation of the PRC2 complex. In some conditions may act as an inhibitor of PRC2 activity: able to activate the CDKN2A gene and promote cellular senescence by suppressing the catalytic activity of the PRC2 complex locally. Binds to the metal-regulating-element (MRE) of MT1A gene promoter. This chain is Metal-response element-binding transcription factor 2 (Mtf2), found in Mus musculus (Mouse).